The chain runs to 431 residues: 5-methylthioadenosine/S-adenosylhomocysteine deaminase (431 aa).

Zn(2+) is bound by residues His-60 and His-62. 2 residues coordinate substrate: Glu-89 and His-182. His-209 provides a ligand contact to Zn(2+). 2 residues coordinate substrate: Glu-212 and Asp-297. Asp-297 serves as a coordination point for Zn(2+).

The protein belongs to the metallo-dependent hydrolases superfamily. MTA/SAH deaminase family. Requires Zn(2+) as cofactor.

It catalyses the reaction S-adenosyl-L-homocysteine + H2O + H(+) = S-inosyl-L-homocysteine + NH4(+). The enzyme catalyses S-methyl-5'-thioadenosine + H2O + H(+) = S-methyl-5'-thioinosine + NH4(+). Catalyzes the deamination of 5-methylthioadenosine and S-adenosyl-L-homocysteine into 5-methylthioinosine and S-inosyl-L-homocysteine, respectively. Is also able to deaminate adenosine. This is 5-methylthioadenosine/S-adenosylhomocysteine deaminase from Natronomonas pharaonis (strain ATCC 35678 / DSM 2160 / CIP 103997 / JCM 8858 / NBRC 14720 / NCIMB 2260 / Gabara) (Halobacterium pharaonis).